Consider the following 77-residue polypeptide: Large ribosomal subunit protein bL28 (77 aa).

The protein belongs to the bacterial ribosomal protein bL28 family.

The protein is Large ribosomal subunit protein bL28 of Laribacter hongkongensis (strain HLHK9).